Here is a 49-residue protein sequence, read N- to C-terminus: Large ribosomal subunit protein bL33B (49 aa).

This sequence belongs to the bacterial ribosomal protein bL33 family.

The polypeptide is Large ribosomal subunit protein bL33B (Limosilactobacillus reuteri subsp. reuteri (strain JCM 1112) (Lactobacillus reuteri)).